The primary structure comprises 243 residues: tRNA1(Val) (adenine(37)-N6)-methyltransferase (243 aa).

It belongs to the methyltransferase superfamily. tRNA (adenine-N(6)-)-methyltransferase family.

The protein localises to the cytoplasm. It catalyses the reaction adenosine(37) in tRNA1(Val) + S-adenosyl-L-methionine = N(6)-methyladenosine(37) in tRNA1(Val) + S-adenosyl-L-homocysteine + H(+). Functionally, specifically methylates the adenine in position 37 of tRNA(1)(Val) (anticodon cmo5UAC). The sequence is that of tRNA1(Val) (adenine(37)-N6)-methyltransferase from Shewanella loihica (strain ATCC BAA-1088 / PV-4).